The sequence spans 281 residues: Lectin CaBo (281 aa).

An N-terminal signal peptide occupies residues 1-29 (MAISKKSSLYLPIFTFITMLLMVVNKVSS). Asp119 lines the Ca(2+) pocket. Arg139 is an a carbohydrate binding site. A propeptide spans 149–163 (IIKNSTTIDFNAAYN) (removed in mature form). 2 residues coordinate Mn(2+): Glu171 and Asp173. Residues Asp173, Tyr175, Asn177, and Asp182 each coordinate Ca(2+). Tyr175 contributes to the a carbohydrate binding site. Positions 182 and 187 each coordinate Mn(2+). An a carbohydrate-binding site is contributed by 262-263 (LY).

This sequence belongs to the leguminous lectin family. As to quaternary structure, equilibrium between homodimer and homotetramer. In terms of processing, the mature chain consists of residues 164-281 followed by residues 30-148. Concanavalin A-like lectins of the Diocleinae subtribe undergo proteolytic processing referred to as circular permutation. The propeptide is split into an N-terminal and a C-terminal part, the gamma and beta chain, respectively. These are then religated in beta-gamma order to form the mature alpha chain. The beta and gamma chains can often be detected in cell extracts.

Functionally, D-mannose-specific lectin. This chain is Lectin CaBo, found in Canavalia bonariensis.